Reading from the N-terminus, the 515-residue chain is Nuclear hormone receptor family member nhr-62 (515 aa).

A DNA-binding region (nuclear receptor) is located at residues 95-170 (NLVCVVCGDQ…AGMNPRAVQS (76 aa)). 2 consecutive NR C4-type zinc fingers follow at residues 98–118 (CVVC…CNGC) and 134–153 (CRFE…CRAC). The disordered stretch occupies residues 169–195 (QSERVEREQNGSPNQIEEDDYKDLSSP). The region spanning 225–509 (EMAKLSEQIV…YLCHEVQFIQ (285 aa)) is the NR LBD domain. The tract at residues 498–509 (SEYLCHEVQFIQ) is AF-2.

This sequence belongs to the nuclear hormone receptor family. Widely expressed at a low level in many tissues including the pharynx, sensory neurons, intestine, spermatheca, hypodermis, and excretory cell.

Its subcellular location is the nucleus. In terms of biological role, orphan nuclear hormone receptor. Required for metabolic and physiologic responses associated with dietary-restriction-induced longevity. Modulates triglyceride and lipid metabolism and autophagy, associated with dietary-restriction, probably acting via regulation of transcription of target genes. This Caenorhabditis elegans protein is Nuclear hormone receptor family member nhr-62 (nhr-62).